The primary structure comprises 758 residues: Relaxin receptor 1 (758 aa).

Topologically, residues 1–408 (MTSGPFFFCV…LENLLASIIQ (408 aa)) are extracellular. The LDL-receptor class A domain occupies 26–63 (SCPLGSFPCGNISKCLPQLLHCNGVDDCGNQADEDNCG). 3 cysteine pairs are disulfide-bonded: C27/C40, C34/C53, and C47/C62. The N-linked (GlcNAc...) asparagine glycan is linked to N36. Ca(2+)-binding residues include L45, N48, V50, D52, D58, and E59. LRR repeat units follow at residues 105–125 (LCRD…PSVS), 126–148 (SNVT…SFRK), 149–172 (YHDL…AFRG), 173–196 (LHSL…VFED), 198–220 (HRLE…TFYG), 221–244 (LNSL…PLCQ), 246–269 (MPRL…TFIS), 270–293 (CNNL…AFTH), 294–317 (LQKL…IFKD), 319–341 (KELS…QFDY), and 342–365 (LAKL…MFRP). Residue N127 is glycosylated (N-linked (GlcNAc...) asparagine). 2 N-linked (GlcNAc...) asparagine glycosylation sites follow: N264 and N272. A glycan (N-linked (GlcNAc...) asparagine) is linked at N325. N368 carries N-linked (GlcNAc...) asparagine glycosylation. A helical membrane pass occupies residues 409 to 429 (RVFVWVVSAITCFGNIFVICM). The Cytoplasmic portion of the chain corresponds to 430–443 (RPYIRSENKLHAMS). The chain crosses the membrane as a helical span at residues 444–464 (IMSLCCADCLMGVYLFVIGAF). The Extracellular segment spans residues 465–486 (DLKFRGEYRKHAQPWMESVHCQ). C485 and C563 are oxidised to a cystine. A helical membrane pass occupies residues 487-507 (FMGSLAVLSTEVSVLLLTFLT). Residues 508–527 (LEKYICIVYPFRCLRPRKCR) lie on the Cytoplasmic side of the membrane. A helical transmembrane segment spans residues 528 to 548 (TVAVLIFIWITGFIVAFAPLG). Residues 549–577 (NKEFFKNYYGTNGVCFPLHSEDTGSTGAQ) are Extracellular-facing. A helical transmembrane segment spans residues 578 to 598 (IYSVVIFLGINLVAFIIIVFS). Residues 599–629 (YGSMFYSVHQSTITATEIQKQVKKEMILAKR) lie on the Cytoplasmic side of the membrane. The chain crosses the membrane as a helical span at residues 630-650 (FFFIVFTDALCWIPIFILKFL). Topologically, residues 651 to 660 (SLIRVEIPDT) are extracellular. Residues 661–681 (ITSWVVIFILPINSALNPIIY) form a helical membrane-spanning segment. At 682 to 758 (TLTTRPFKEM…SRSSRLNSYS (77 aa)) the chain is on the cytoplasmic side.

The protein belongs to the G-protein coupled receptor 1 family. Interacts with C1QTNF8. Detected in brain cortex, and at low levels in testis.

Its subcellular location is the cell membrane. Receptor for relaxins. The activity of this receptor is mediated by G proteins leading to stimulation of adenylate cyclase and an increase of cAMP. Binding of the ligand may also activate a tyrosine kinase pathway that inhibits the activity of a phosphodiesterase that degrades cAMP. The sequence is that of Relaxin receptor 1 (Rxfp1) from Rattus norvegicus (Rat).